Here is a 135-residue protein sequence, read N- to C-terminus: Serine protease inhibitor swm-1 (135 aa).

The signal sequence occupies residues Met-1–Ala-16. Intrachain disulfides connect Cys-20–Cys-53, Cys-29–Cys-48, Cys-33–Cys-44, Cys-37–Cys-73, Cys-55–Cys-67, Cys-80–Cys-114, Cys-89–Cys-109, Cys-93–Cys-105, Cys-97–Cys-133, and Cys-116–Cys-127. TIL domains follow at residues Cys-20–Cys-73 and Cys-80–Cys-133. Residue Asn-83 is glycosylated (N-linked (GlcNAc...) asparagine).

In terms of tissue distribution, in male, expressed in the vas deferens cuboidal cells and, in posterior body wall and male-specific diagonal muscles. In hermaphrodites, expressed in posterior body wall muscles and spermatheca.

The protein localises to the secreted. The protein resides in the cytoplasmic vesicle. It is found in the secretory vesicle lumen. Functionally, serine protease inhibitor. Probably by inhibiting serine protease tyr-5 in males, prevents the maturation of spermatids into mature motile spermatozoa until their transfer into a hermaphrodite. Also required for efficient sperm transfer and thus for male fertility. The sequence is that of Serine protease inhibitor swm-1 from Caenorhabditis elegans.